The sequence spans 267 residues: Type II pantothenate kinase (267 aa).

6–13 (DAGGTLIK) contacts ATP. The active-site Proton acceptor is E70. Residues T99, 121–125 (GGMIQ), Y137, and S225 contribute to the ATP site.

The protein belongs to the type II pantothenate kinase family. In terms of assembly, homodimer.

The protein localises to the cytoplasm. It catalyses the reaction (R)-pantothenate + ATP = (R)-4'-phosphopantothenate + ADP + H(+). The protein operates within cofactor biosynthesis; coenzyme A biosynthesis; CoA from (R)-pantothenate: step 1/5. Its function is as follows. Catalyzes the phosphorylation of pantothenate (Pan), the first step in CoA biosynthesis. The protein is Type II pantothenate kinase of Staphylococcus aureus (strain USA300).